The primary structure comprises 277 residues: Large ribosomal subunit protein uL2 (277 aa).

Residues 216–277 are disordered; that stretch reads RRPHNRGVAM…IIRRRKVGKG (62 aa).

Belongs to the universal ribosomal protein uL2 family. Part of the 50S ribosomal subunit. Forms a bridge to the 30S subunit in the 70S ribosome.

Functionally, one of the primary rRNA binding proteins. Required for association of the 30S and 50S subunits to form the 70S ribosome, for tRNA binding and peptide bond formation. It has been suggested to have peptidyltransferase activity; this is somewhat controversial. Makes several contacts with the 16S rRNA in the 70S ribosome. The chain is Large ribosomal subunit protein uL2 from Acidiphilium cryptum (strain JF-5).